A 47-amino-acid chain; its full sequence is Rhodotorucin-A peptides type 3 (47 aa).

Positions 1-3 (MVA) are excised as a propeptide. Cys14 is lipidated: S-farnesyl cysteine. Positions 15 to 18 (TVAK) are excised as a propeptide. Residue Cys29 is the site of S-farnesyl cysteine attachment. Positions 30–33 (TVSK) are excised as a propeptide. Cys44 is lipidated: S-farnesyl cysteine. The propeptide occupies 45–47 (TVA).

The protein resides in the cell membrane. Rhodotorucin-A is a mating pheromone in cells of mating type A of Rhodosporidium toruloides. The chain is Rhodotorucin-A peptides type 3 (RHA3) from Rhodotorula toruloides (Yeast).